The following is a 71-amino-acid chain: uncharacterized protein (71 aa).

This is an uncharacterized protein from Methanocaldococcus jannaschii (strain ATCC 43067 / DSM 2661 / JAL-1 / JCM 10045 / NBRC 100440) (Methanococcus jannaschii).